We begin with the raw amino-acid sequence, 588 residues long: Mediator of RNA polymerase II transcription subunit 26 (588 aa).

The region spanning Q10 to V87 is the TFIIS N-terminal domain. Disordered stretches follow at residues R112–N393 and K412–Q441. The segment covering S123–I133 has biased composition (basic and acidic residues). Over residues P179–S191 the composition is skewed to polar residues. Residues S207–S218 are compositionally biased toward basic and acidic residues. The segment covering S314–P325 has biased composition (pro residues). 2 positions are modified to phosphoserine: S435 and S458.

The protein belongs to the Mediator complex subunit 26 family. Component of the Mediator complex, which is composed of MED1, MED4, MED6, MED7, MED8, MED9, MED10, MED11, MED12, MED13, MED13L, MED14, MED15, MED16, MED17, MED18, MED19, MED20, MED21, MED22, MED23, MED24, MED25, MED26, MED27, MED29, MED30, MED31, CCNC, CDK8 and CDC2L6/CDK11. The MED12, MED13, CCNC and CDK8 subunits form a distinct module termed the CDK8 module. Mediator containing the CDK8 module is less active than Mediator lacking this module in supporting transcriptional activation. Individual preparations of the Mediator complex lacking one or more distinct subunits have been variously termed ARC, CRSP, DRIP, PC2, SMCC and TRAP. Interacts with CEBPB (when not methylated).

It localises to the nucleus. In terms of biological role, component of the Mediator complex, a coactivator involved in the regulated transcription of nearly all RNA polymerase II-dependent genes. Mediator functions as a bridge to convey information from gene-specific regulatory proteins to the basal RNA polymerase II transcription machinery. Mediator is recruited to promoters by direct interactions with regulatory proteins and serves as a scaffold for the assembly of a functional pre-initiation complex with RNA polymerase II and the general transcription factors. This is Mediator of RNA polymerase II transcription subunit 26 (Med26) from Mus musculus (Mouse).